Here is a 1219-residue protein sequence, read N- to C-terminus: Polyamine-transporting ATPase 13A3 (1219 aa).

Residues 1–28 (MDKEERKTINKGQEDEMEIHGYNLCRWK) are Cytoplasmic-facing. The stretch at 29-49 (LAMVFVGVICTGGFLLLLLYW) is an intramembrane region. Residues 50 to 201 (LPEWRVKATC…IAVKVPSVFK (152 aa)) lie on the Cytoplasmic side of the membrane. A helical transmembrane segment spans residues 202-222 (LLIKEVLNPFYIFQLFSVILW). Topologically, residues 223-228 (SVDEYY) are lumenal. Residues 229 to 249 (YYALAIVIMSVVSIISSLYSI) form a helical membrane-spanning segment. At 250 to 405 (RKQYVMLHDM…KPTDFKLYRD (156 aa)) the chain is on the cytoplasmic side. The chain crosses the membrane as a helical span at residues 406 to 426 (AYLFLLCLVVVAGIGFIYTII). Residues 427 to 444 (NSILNEKEVQEIIIKSLD) lie on the Lumenal side of the membrane. The chain crosses the membrane as a helical span at residues 445-465 (IITITVPPALPAAMTAGIVYA). Topologically, residues 466 to 936 (QRRLKKVGIF…ALMTSFCVFK (471 aa)) are cytoplasmic. The 4-aspartylphosphate intermediate role is filled by Asp-494. Asp-494 and Thr-496 together coordinate Mg(2+). Residues 494 to 496 (DKT), Phe-624, Arg-680, and Asp-746 each bind ATP. Ser-813 is modified (phosphoserine). Mg(2+)-binding residues include Asp-879 and Asp-883. 879 to 883 (DGAND) is an ATP binding site. The helical transmembrane segment at 937 to 957 (FMALYSIIQYFSVTLLYSILS) threads the bilayer. A topological domain (lumenal) is located at residue Asn-958. A helical membrane pass occupies residues 959–979 (LGDFQFLFIDLAIILVVVFTM). Topologically, residues 980-995 (SLNPAWKELVAQRPPS) are cytoplasmic. A helical transmembrane segment spans residues 996 to 1016 (GLISGALLFSVLSQIVISVGF). Topologically, residues 1017–1066 (QSLGFFWVKQYKVCDPNSDVCNTTRSACWNSSHLYNGTELDSCKIQNYEN) are lumenal. The chain crosses the membrane as a helical span at residues 1067–1087 (TTVFFISSFQYLTVAVAFSKG). The Cytoplasmic segment spans residues 1088 to 1098 (KPFRQPCYKNY). A helical membrane pass occupies residues 1099-1119 (FFVISVIILYVFILFIMLHPV). Over 1120 to 1136 (ASVDQVLEIMCVPYQWR) the chain is Lumenal. A helical membrane pass occupies residues 1137–1157 (IYMLIIVLINAFVSITVEESV). The Cytoplasmic segment spans residues 1158–1219 (DRWGKCCLSW…NGSCQIITIA (62 aa)).

The protein belongs to the cation transport ATPase (P-type) (TC 3.A.3) family. Type V subfamily. As to expression, expression is greatest in liver, followed by kidney, colon, stomach, brain and small intestine. Isoform 1 is highly expressed in the kidney while isoform 2 is highly expressed in the brain.

Its subcellular location is the recycling endosome membrane. The protein resides in the early endosome membrane. It is found in the late endosome membrane. It catalyses the reaction putrescine(out) + ATP + H2O = putrescine(in) + ADP + phosphate + H(+). In terms of biological role, ATP-driven pump involved in endocytosis-dependent polyamine transport. Uses ATP as an energy source to transfer polyamine precursor putrescine from the endosomal compartment to the cytosol. The polypeptide is Polyamine-transporting ATPase 13A3 (Mus musculus (Mouse)).